We begin with the raw amino-acid sequence, 2162 residues long: MEEEEHRGVVLVCSICGFLFAVLGPLSFWILWAVNWRPWRLYSWIYARKWPAYVQGPQLSTLCSFFTLFAWLVVVSPITVLLVWGGILIALLERNIIGLAVIMVGVALLLSFYSIMLWWRTQWQSSKAVAYLLLLAVGLLCAYEFCAVYVTTGASASELNSPSGFFFGVSAISLAINMLFISKILFNGSGFDVDEYVRRLYKFAYSDCVEVAPVSCSPDPPDPSELYMTKSSRVLHLGLLYLCSLMVLVVYSILYGLTSKEARWLGALTSVAVVILDWNLGLCSFRFELLKSRMIALFVAGTSRVFLICFGVHYWYLGHCISYAFVASVLLAAAVSCWLSISNPSVARIDALRSTVIKLREGFRRKGQTSSSNSSDGCGSSVKRSSGSVEAGPHGNATDSMYRSNSQSDCVNWNNVPFDRSNSCQEGQSSDKNIDSGRASLAHRSNSCLSAVAVQDPETAVVSADRHGDPTASLVVCSSSGLESQGCESSGSATASGNQQLLDLNLAAIFQDRLNDPRITSMLKRNGGLGDVELANLLQDKGLDPNFSYMMKDKVMDPRILALLQRSSLDADREHQDDVDVTGTDSDRLDTTIANQISLSEELRRSGLENWLNLSRLMFHQVAGSPIRAFVVFTLIFIIETVTVAVHRPKPIKVINATHEQFEFGFSILLLSPVVCSIMAFIWSLCAEEMTMTSKPRKYGFIAWLLSTCVGLLLSFLSKSSVILGLSLTVPLMVACLSFAIPIWMRNGYRFWIPGGELDSRENIRQAPGKKERALFAISITVFTASVIGLGAIVSAKPLDALGYKGWDADKKSFYSPYATSMYLGWALSSTIAVLATGVIPIVAWFATYRFSPSSAICVGLFATVLVSFCGVSYWGVVNSRQDGVPLKADFLAALLPLLCIPAVFSLFTGMYKWKDDDWKISRGVYLFVGMGVLLLLGAISAVIVTIRPWTVGVACLLVILFLVFAIGVIHYWTSNNFYLTRTQMLLVCSLAFLLALAAFLMGLFQEKPFVGASIGYFSFLFLLTGRALTVLLSPPIVVYSPRVLPVYVYDAHADSAKNVSYAFLILYGIALATEVWGVIASLILNPPFIGAAISAITLVIAFSFAVSRPCLTLKMLEDAVHFLSKDTVVQAMSRSANKTRNAISGTYSAPQRSASSAALLVGDPAITLDRAGNFVLPRADVMKLRDRLRNEEITAGSFFCGVKNCLMIGSPVDVDYRRNMCAHARILALEEAIDTEWVYMWDKFGGYLLLLLGLTAKAEQIQDEVRLRLFLDSIGLSDLSAKEIKKWMPEDRRHFELIQESYIREKEMEEEVLMQRREEEGKGRERRKALLEREERKWKELEISLLSSIPNAGSRDAAAMAAAVRAVGGDSALEDSFARDRVSSIARHIRKAQLARRAEQTGIPDTVCILDDEPRSTGRHCGEIDLCLCESKKVSFSIAVMVQPVSGPVCLFGTEFQKKVCWEILVAGSEQGMEAGQVGLRLVTKGERMTTVAKEWNIGASSIADGRWHLVTVTIDADLGEATSFIDGVYDGYQNALPLPRNNGIWEPGTDIWVGARPPTDLDAFGRSDSEGSDSKMQIMDAFLWGRCLTEDEVAMLHTAICSAEYGLFDLAAEDAWHGSYSARVDDWESEEANFELYDQEDVEWDGQYSSGRKRHARDSVAIDIDSFARRPRKPRFETREEVNQRMLSVERAVREALIAKGERNFTDQEFPPDDRSLFVDPMNPSLKLQVVSEWMRPSDIAKEVSISSQPCLFSGSVNSSDVCQGRLGDCWFLSAVAVLTEMARISEVIITPEYNEEGIYTVRFCIQGEWVAVVVDDWIPCESPGKPAFATSRKQNELWVSILEKAYAKLHGSYEALEGGLVQDALVDLTGGAGEEIDMRSPQAQIDLASGRLWSQLLHFKQEGFLLGAGSPSGSDAHISSSGIVQGHAYSILQVREVDGHKLVQIRNPWANEVEWNGPWSDSSQEWTERMKHKLKHVPQSKNGVFWMSWQDFQIHFRSIYVCRVYPPEMRYSVHGQWRGYSAGGCQDYDSWHQNPQYRLRVTGRDALYPVHVFITLTQGVGFSRKTNGFRNYQSSHDSSMFYIGMRILKTRGCRAAYNIYMHESVGGTDYVNSREISCELVLEPYPKGYTIVPTTIHPGEEAPFVLSVFTKAPIKLEAV.

The signal sequence occupies residues Met1–Ala33. The Extracellular portion of the chain corresponds to Val34 to Ala70. The helical transmembrane segment at Trp71–Leu91 threads the bilayer. Residues Leu92–Asn95 lie on the Cytoplasmic side of the membrane. A helical membrane pass occupies residues Ile96–Met116. At Leu117–Lys127 the chain is on the extracellular side. A helical membrane pass occupies residues Ala128–Val148. At Tyr149–Gly164 the chain is on the cytoplasmic side. A helical transmembrane segment spans residues Phe165–Leu185. Over Phe186–His236 the chain is Extracellular. Residues Leu237–Leu257 form a helical membrane-spanning segment. Topologically, residues Thr258–Trp264 are cytoplasmic. Residues Leu265–Phe285 form a helical membrane-spanning segment. Topologically, residues Arg286–Met294 are extracellular. The helical transmembrane segment at Ile295 to Trp315 threads the bilayer. Residues Tyr316–Cys320 lie on the Cytoplasmic side of the membrane. The chain crosses the membrane as a helical span at residues Ile321 to Ile341. The Extracellular portion of the chain corresponds to Ser342–Pro626. A disordered region spans residues Lys366–Arg403. Residues Ser370–Ser381 are compositionally biased toward low complexity. The helical transmembrane segment at Ile627–His647 threads the bilayer. The Cytoplasmic portion of the chain corresponds to Arg648–Glu663. A helical transmembrane segment spans residues Phe664 to Ser684. Residues Leu685–Arg697 are Extracellular-facing. The chain crosses the membrane as a helical span at residues Lys698–Ser718. Residues Lys719 to Val722 lie on the Cytoplasmic side of the membrane. The chain crosses the membrane as a helical span at residues Ile723–Ile743. Over Trp744–Arg773 the chain is Extracellular. Residues Ala774–Val794 traverse the membrane as a helical segment. Over Ser795–Gly825 the chain is Cytoplasmic. The chain crosses the membrane as a helical span at residues Trp826–Phe846. Residues Ala847–Ala856 are Extracellular-facing. Residues Ile857–Val877 form a helical membrane-spanning segment. At Val878–Asp890 the chain is on the cytoplasmic side. Residues Phe891 to Met911 traverse the membrane as a helical segment. Residues Tyr912–Gly924 lie on the Extracellular side of the membrane. Residues Val925 to Val945 form a helical membrane-spanning segment. The Cytoplasmic portion of the chain corresponds to Thr946–Pro949. The chain crosses the membrane as a helical span at residues Trp950–Ile970. Residues His971–Gln984 are Extracellular-facing. A helical transmembrane segment spans residues Met985–Phe1005. At Gln1006–Ser1019 the chain is on the cytoplasmic side. A helical transmembrane segment spans residues Phe1020–Tyr1040. At Ser1041–Ala1063 the chain is on the extracellular side. The helical transmembrane segment at Phe1064 to Ile1084 threads the bilayer. The Cytoplasmic segment spans residues Leu1085–Val2162. A phosphoserine mark is found at Ser1372 and Ser1377. The Calpain catalytic 1 domain maps to Thr1418–Asp1611. Phosphoserine is present on Ser1668. The Calpain catalytic 2 domain occupies Asn1706 to Tyr2008. Active-site residues include Cys1772, His1930, and Asn1950.

Belongs to the peptidase C2 family. Post-translationally, autocatalytic proteolytic cleavage leading to the production of mainly cytoplasmic localized subproducts of about 85 and 120 kDa. Ubiquitously expressed with higher levels in embryos, vasculatures, leaf primordia, leaf margins, and shoot apical meristem (SAM).

The protein resides in the endoplasmic reticulum membrane. It is found in the cytoplasm. Its subcellular location is the cell membrane. It localises to the endosome membrane. Functionally, essential protease involved in epiderm development. Required for aleurone cell development in the endosperm probably by maintaining and restricting the aleurone and embryonic epidermal L1 cell-layer fates as well as meristems organization. Involved in the maintenance of adaxial/abaxial axis information in developing leaves, probably by regulating cell proliferation and expansion. Does not need calcium ions to be active. The protein is Calpain-type cysteine protease ADL1 (ADL1) of Oryza sativa subsp. japonica (Rice).